The chain runs to 149 residues: 3-dehydroquinate dehydratase (149 aa).

The Proton acceptor role is filled by Tyr-26. Substrate-binding residues include Asn-77, His-83, and Asp-90. His-103 functions as the Proton donor in the catalytic mechanism. Substrate is bound by residues 104-105 (LS) and Arg-114.

The protein belongs to the type-II 3-dehydroquinase family. In terms of assembly, homododecamer.

It catalyses the reaction 3-dehydroquinate = 3-dehydroshikimate + H2O. The protein operates within metabolic intermediate biosynthesis; chorismate biosynthesis; chorismate from D-erythrose 4-phosphate and phosphoenolpyruvate: step 3/7. In terms of biological role, catalyzes a trans-dehydration via an enolate intermediate. The polypeptide is 3-dehydroquinate dehydratase (Aeromonas hydrophila subsp. hydrophila (strain ATCC 7966 / DSM 30187 / BCRC 13018 / CCUG 14551 / JCM 1027 / KCTC 2358 / NCIMB 9240 / NCTC 8049)).